The sequence spans 294 residues: Ribosomal protein L11 methyltransferase (294 aa).

Thr144, Gly165, Asp187, and Asn229 together coordinate S-adenosyl-L-methionine.

The protein belongs to the methyltransferase superfamily. PrmA family.

The protein resides in the cytoplasm. The enzyme catalyses L-lysyl-[protein] + 3 S-adenosyl-L-methionine = N(6),N(6),N(6)-trimethyl-L-lysyl-[protein] + 3 S-adenosyl-L-homocysteine + 3 H(+). Functionally, methylates ribosomal protein L11. This Pseudomonas paraeruginosa (strain DSM 24068 / PA7) (Pseudomonas aeruginosa (strain PA7)) protein is Ribosomal protein L11 methyltransferase.